Consider the following 556-residue polypeptide: 2-succinyl-5-enolpyruvyl-6-hydroxy-3-cyclohexene-1-carboxylate synthase (556 aa).

The protein belongs to the TPP enzyme family. MenD subfamily. In terms of assembly, homodimer. Mg(2+) is required as a cofactor. Mn(2+) serves as cofactor. The cofactor is thiamine diphosphate.

The enzyme catalyses isochorismate + 2-oxoglutarate + H(+) = 5-enolpyruvoyl-6-hydroxy-2-succinyl-cyclohex-3-ene-1-carboxylate + CO2. It participates in quinol/quinone metabolism; 1,4-dihydroxy-2-naphthoate biosynthesis; 1,4-dihydroxy-2-naphthoate from chorismate: step 2/7. The protein operates within quinol/quinone metabolism; menaquinone biosynthesis. Functionally, catalyzes the thiamine diphosphate-dependent decarboxylation of 2-oxoglutarate and the subsequent addition of the resulting succinic semialdehyde-thiamine pyrophosphate anion to isochorismate to yield 2-succinyl-5-enolpyruvyl-6-hydroxy-3-cyclohexene-1-carboxylate (SEPHCHC). This is 2-succinyl-5-enolpyruvyl-6-hydroxy-3-cyclohexene-1-carboxylate synthase from Salmonella paratyphi A (strain AKU_12601).